The following is a 347-amino-acid chain: Dihydroorotase (347 aa).

Zn(2+)-binding residues include His17 and His19. Substrate is bound by residues 19 to 21 (HLR) and Asn45. Zn(2+) contacts are provided by Lys103, His140, and His178. The residue at position 103 (Lys103) is an N6-carboxylysine. Residue His140 coordinates substrate. Leu223 contributes to the substrate binding site. A Zn(2+)-binding site is contributed by Asp251. Asp251 is a catalytic residue. His255 and Ala267 together coordinate substrate.

It belongs to the metallo-dependent hydrolases superfamily. DHOase family. Class II DHOase subfamily. In terms of assembly, homodimer. The cofactor is Zn(2+).

The catalysed reaction is (S)-dihydroorotate + H2O = N-carbamoyl-L-aspartate + H(+). The protein operates within pyrimidine metabolism; UMP biosynthesis via de novo pathway; (S)-dihydroorotate from bicarbonate: step 3/3. In terms of biological role, catalyzes the reversible cyclization of carbamoyl aspartate to dihydroorotate. The chain is Dihydroorotase from Citrobacter koseri (strain ATCC BAA-895 / CDC 4225-83 / SGSC4696).